We begin with the raw amino-acid sequence, 432 residues long: MKFIDTAKFTIKAGNGGNGAVSFHTALFVPNGGPNGGDGGNGGSVIFEADGGKHSLLDLKLQKQLSAQDGFKGDIKNMHGAQGKDLIVRVPVGTLIIENKTGTILADMDEDKKQVLVAKGGKGGKGNARFANSRNKAPTIFEAGEIGQFYEVKAELKVLADVGFVGLPNAGKSTLLRAISNSKPEVADYAFTTLNPQLGVSRAKDGSTFVVADLPGLIEGASLGKGLGHQFLKHIERCRVICHVLDMSGNYGQEDVIKNYELIRSELVKYNYKLDERPEIIVANKMDTDEAQLNMMEEDIKKYFKDKKVVFVSGLLKDNVDELLLKIAKELETAKYVPLWEMEQDIYEGIKVYRLEEDEEDIQIINKGNGRWEVAGDTIYKIYQKFPITTDDNLLLFNEKLKKSGVYDMLRERGVGAGDIVKVFEYELEWMD.

The Obg domain occupies 1 to 159 (MKFIDTAKFT…YEVKAELKVL (159 aa)). The OBG-type G domain maps to 160–332 (ADVGFVGLPN…LLLKIAKELE (173 aa)). GTP-binding positions include 166 to 173 (GLPNAGKS), 191 to 195 (FTTLN), 213 to 216 (DLPG), 284 to 287 (NKMD), and 313 to 315 (SGL). Residues Ser-173 and Thr-193 each contribute to the Mg(2+) site. The OCT domain occupies 354-432 (RLEEDEEDIQ…VFEYELEWMD (79 aa)).

It belongs to the TRAFAC class OBG-HflX-like GTPase superfamily. OBG GTPase family. Monomer. Mg(2+) serves as cofactor.

The protein localises to the cytoplasm. Its function is as follows. An essential GTPase which binds GTP, GDP and possibly (p)ppGpp with moderate affinity, with high nucleotide exchange rates and a fairly low GTP hydrolysis rate. Plays a role in control of the cell cycle, stress response, ribosome biogenesis and in those bacteria that undergo differentiation, in morphogenesis control. The protein is GTPase Obg of Mesoplasma florum (strain ATCC 33453 / NBRC 100688 / NCTC 11704 / L1) (Acholeplasma florum).